The primary structure comprises 668 residues: MTSRMPTSGHRTSSSSSERGNMSVQQGKKPVVPGMSSGEDSSRPSTSYPQVPPAPLRPGWTLSRDSSVVRGINGDFHPGAQTPMSGMTHASWLTNNGNESNLSFTSSIMQEEAKLRWDSDEELKKMSKSMLRLQKWSLIIGLAGINGALIYIGWKYYQVYYFFLVLLSSNTVLQSFMCICIILHWFCTRVLCFWWRPKENIPAEPEKMVLLLPCYNETYEELTRSLDSLIAQKHIDNHPRVIFIVVDGNVRGPGMEKTTQEYLLQDILEPGPSRTFENGYRARDGLFMPVKTQTGFYKGIPYVFVGKRYNQGKRDSLCFARSLLYHFKQRSENVVTMFNNDLFEYIGNNFINAGLDDVTYLCGMDADTVFDEDCIYEMIVEIRKNPKVVGVCGHVCVDFDGSNWGYWSLYQSVEYSQTQGLRRMFQSRITGKVNCLPGCCQLIRVDEATFGDAVLRERFGYCPKPNDIMTQHIMGNYSEDSIHASIIFSLFPGCQTAQALRAKAMTIVPQDWKVFLSQRKRWALGSISNEFVMIFRPGIILIERLQSLIAVITWAITPFIIAAFVELLMVFAKRGKEVMSDPVFLGLICVLFFRYLYSFCIGFWLPRNNLERLQYFAGYVMHLFTSPFMNIIILVYSLFHSDDFKWGKTREVIRGEKDTDDAGGRGTH.

A compositionally biased stretch (polar residues) spans 1–26; the sequence is MTSRMPTSGHRTSSSSSERGNMSVQQ. The disordered stretch occupies residues 1 to 62; that stretch reads MTSRMPTSGH…PAPLRPGWTL (62 aa). N-linked (GlcNAc...) asparagine glycosylation is found at Asn-21, Asn-98, and Asn-101. The next 2 membrane-spanning stretches (helical) occupy residues 136-156 and 162-182; these read WSLI…GWKY and FFLV…ICII. Residues Asn-216 and Asn-476 are each glycosylated (N-linked (GlcNAc...) asparagine). 4 helical membrane-spanning segments follow: residues 522–542, 548–568, 583–603, and 615–635; these read WALG…IILI, LIAV…VELL, VFLG…CIGF, and YFAG…IILV.

The protein belongs to the chitin synthase family. Class VIII subfamily.

It localises to the cell membrane. It is found in the cell septum. It catalyses the reaction [(1-&gt;4)-N-acetyl-beta-D-glucosaminyl](n) + UDP-N-acetyl-alpha-D-glucosamine = [(1-&gt;4)-N-acetyl-beta-D-glucosaminyl](n+1) + UDP + H(+). Functionally, polymerizes chitin, a structural polymer of the cell wall and septum, by transferring the sugar moiety of UDP-GlcNAc to the non-reducing end of the growing chitin polymer. Participated in the development of cell wall and plays a critical role in fungal response to environmental stresses. Necessary for pathogenicity and deoxinivalenol (DON) production. This is Chitin synthase 8 from Gibberella zeae (strain ATCC MYA-4620 / CBS 123657 / FGSC 9075 / NRRL 31084 / PH-1) (Wheat head blight fungus).